The sequence spans 218 residues: Protein-lysine N-methyltransferase M142.8 (218 aa).

It belongs to the class I-like SAM-binding methyltransferase superfamily. EFM5 family.

The protein resides in the cytoplasm. Its function is as follows. S-adenosyl-L-methionine-dependent protein-lysine N-methyltransferase that methylates elongation factor 1-alpha. The chain is Protein-lysine N-methyltransferase M142.8 from Caenorhabditis elegans.